We begin with the raw amino-acid sequence, 387 residues long: Acetylserotonin O-methyltransferase (387 aa).

S-adenosyl-L-methionine contacts are provided by residues tyrosine 153, tryptophan 170, glutamate 216, 246–248 (GDF), and arginine 263. Residue histidine 266 is the Proton donor/acceptor of the active site. Residues aspartate 267 and glutamine 317 each coordinate substrate. Residues 355–387 (ARGGGAGARSDGGGGEATSQTGSGTGREVGAQD) form a disordered region. Residues 356 to 370 (RGGGAGARSDGGGGE) are compositionally biased toward gly residues.

Belongs to the class I-like SAM-binding methyltransferase superfamily. Cation-independent O-methyltransferase family. In terms of assembly, homodimer.

The enzyme catalyses N-acetylserotonin + S-adenosyl-L-methionine = melatonin + S-adenosyl-L-homocysteine + H(+). It functions in the pathway aromatic compound metabolism; melatonin biosynthesis; melatonin from serotonin: step 1/2. In terms of biological role, catalyzes the transfer of a methyl group onto N-acetylserotonin, producing melatonin (N-acetyl-5-methoxytryptamine). This chain is Acetylserotonin O-methyltransferase (Asmt), found in Mus musculus molossinus (Japanese house mouse).